Here is a 55-residue protein sequence, read N- to C-terminus: Metallothionein-3 (55 aa).

It belongs to the metallothionein superfamily. Type 11 family.

This is Metallothionein-3 (MTP3) from Yarrowia lipolytica (strain CLIB 122 / E 150) (Yeast).